The primary structure comprises 161 residues: Putative pre-16S rRNA nuclease (161 aa).

It belongs to the YqgF nuclease family.

The protein localises to the cytoplasm. Its function is as follows. Could be a nuclease involved in processing of the 5'-end of pre-16S rRNA. This is Putative pre-16S rRNA nuclease from Bradyrhizobium sp. (strain BTAi1 / ATCC BAA-1182).